The primary structure comprises 185 residues: Elongation factor P (185 aa).

The protein belongs to the elongation factor P family.

It is found in the cytoplasm. The protein operates within protein biosynthesis; polypeptide chain elongation. Functionally, involved in peptide bond synthesis. Stimulates efficient translation and peptide-bond synthesis on native or reconstituted 70S ribosomes in vitro. Probably functions indirectly by altering the affinity of the ribosome for aminoacyl-tRNA, thus increasing their reactivity as acceptors for peptidyl transferase. This is Elongation factor P from Geobacillus kaustophilus (strain HTA426).